The following is a 352-amino-acid chain: Serine/threonine-protein phosphatase 2A activator 2 (352 aa).

The protein belongs to the PTPA-type PPIase family.

It localises to the cytoplasm. The catalysed reaction is [protein]-peptidylproline (omega=180) = [protein]-peptidylproline (omega=0). PPIases accelerate the folding of proteins. It catalyzes the cis-trans isomerization of proline imidic peptide bonds in oligopeptides. Acts as a regulatory subunit for PP2A-like phosphatases modulating their activity or substrate specificity, probably by inducing a conformational change in the catalytic subunit, a direct target of the PPIase. Can reactivate inactive phosphatase PP2A-phosphatase methylesterase complexes (PP2Ai) in presence of ATP and Mg(2+) by dissociating the inactive form from the complex. The sequence is that of Serine/threonine-protein phosphatase 2A activator 2 (rrd2) from Schizosaccharomyces pombe (strain 972 / ATCC 24843) (Fission yeast).